The sequence spans 60 residues: MANPKRRWSKARTGKRRSQWKLASPTLVSCPQCHVFKLPHRVCGECGYYDGKQVVKVEAK.

The protein belongs to the bacterial ribosomal protein bL32 family.

The sequence is that of Large ribosomal subunit protein bL32 from Ruminiclostridium cellulolyticum (strain ATCC 35319 / DSM 5812 / JCM 6584 / H10) (Clostridium cellulolyticum).